Here is a 320-residue protein sequence, read N- to C-terminus: Formimidoylglutamase (320 aa).

The Mn(2+) site is built by H125, D153, H155, D157, D244, and D246.

It belongs to the arginase family. It depends on Mn(2+) as a cofactor.

It carries out the reaction N-formimidoyl-L-glutamate + H2O = formamide + L-glutamate. It participates in amino-acid degradation; L-histidine degradation into L-glutamate; L-glutamate from N-formimidoyl-L-glutamate (hydrolase route): step 1/1. Catalyzes the conversion of N-formimidoyl-L-glutamate to L-glutamate and formamide. The polypeptide is Formimidoylglutamase (Rhodococcus jostii (strain RHA1)).